We begin with the raw amino-acid sequence, 247 residues long: Peptidyl-prolyl cis-trans isomerase FKBP17-2, chloroplastic (247 aa).

The N-terminal 79 residues, 1–79, are a transit peptide targeting the chloroplast; it reads MANLFTATAP…SSLTRRFGIG (79 aa). The segment at 26–64 is disordered; that stretch reads QCYASSSNPPEPESSSPPPPPPPPQPLASQQKRKKNVET. Pro residues predominate over residues 34 to 51; it reads PPEPESSSPPPPPPPPQP. The region spanning 141–243 is the PPIase FKBP-type domain; it reads GDLVVIDLKG…EYIVEIDRVS (103 aa).

The protein belongs to the FKBP-type PPIase family.

It is found in the plastid. It localises to the chloroplast thylakoid lumen. The enzyme catalyses [protein]-peptidylproline (omega=180) = [protein]-peptidylproline (omega=0). Its function is as follows. PPIases accelerate the folding of proteins. It catalyzes the cis-trans isomerization of proline imidic peptide bonds in oligopeptides. The protein is Peptidyl-prolyl cis-trans isomerase FKBP17-2, chloroplastic (FKBP17-2) of Arabidopsis thaliana (Mouse-ear cress).